We begin with the raw amino-acid sequence, 84 residues long: Small ribosomal subunit protein uS17 (84 aa).

This sequence belongs to the universal ribosomal protein uS17 family. As to quaternary structure, part of the 30S ribosomal subunit.

Functionally, one of the primary rRNA binding proteins, it binds specifically to the 5'-end of 16S ribosomal RNA. This chain is Small ribosomal subunit protein uS17, found in Karelsulcia muelleri (strain GWSS) (Sulcia muelleri).